Here is a 551-residue protein sequence, read N- to C-terminus: Palmdelphin (551 aa).

Methionine 1 carries the N-acetylmethionine modification. A coiled-coil region spans residues 12–106; the sequence is QAITDKRKIQ…LQISTKEEAI (95 aa). Lysine 125 is covalently cross-linked (Glycyl lysine isopeptide (Lys-Gly) (interchain with G-Cter in SUMO2)). Serine 135 is modified (phosphoserine). Lysine 179 is covalently cross-linked (Glycyl lysine isopeptide (Lys-Gly) (interchain with G-Cter in SUMO1); alternate). Residue lysine 179 forms a Glycyl lysine isopeptide (Lys-Gly) (interchain with G-Cter in SUMO2); alternate linkage. Positions 248–259 are enriched in basic and acidic residues; it reads ERNSKSPTEYHE. The disordered stretch occupies residues 248–280; sequence ERNSKSPTEYHEPVYANPFYRPTTPQRETVTPG. Residues 270-280 show a composition bias toward polar residues; it reads TTPQRETVTPG. Phosphothreonine is present on threonine 271. Phosphoserine is present on residues serine 321, serine 370, serine 384, and serine 385. Disordered stretches follow at residues 342–392 and 449–535; these read TPQK…QEDE and DEEE…EDPS. The span at 484–495 shows a compositional bias: basic and acidic residues; sequence KRSEASPHENTN. Phosphoserine occurs at positions 498, 515, and 520.

The protein belongs to the paralemmin family. Interacts with GLUL. Phosphorylated. In terms of tissue distribution, ubiquitous. Most abundant in cardiac and skeletal muscle.

It localises to the cytoplasm. The protein localises to the cell projection. Its subcellular location is the dendrite. The protein resides in the dendritic spine. The polypeptide is Palmdelphin (PALMD) (Homo sapiens (Human)).